The following is a 303-amino-acid chain: Olfactory receptor 10A2 (303 aa).

Over 1-12 the chain is Extracellular; sequence MSFSSLPTEIQS. The chain crosses the membrane as a helical span at residues 13 to 33; the sequence is LLFLTFLTIYLVTLMGNCLII. The Cytoplasmic segment spans residues 34–41; the sequence is LVTLADPM. The helical transmembrane segment at 42 to 62 threads the bilayer; that stretch reads LHSPMYFFLRNLSFLEIGFNL. Topologically, residues 63–86 are extracellular; the sequence is VIVPKMLGTLLAQDTTISFLGCAT. A disulfide bridge connects residues cysteine 84 and cysteine 176. The chain crosses the membrane as a helical span at residues 87-107; sequence QMYFFFFFGVAECFLLATMAY. Over 108–126 the chain is Cytoplasmic; it reads DRYVAICSPLHYPVIMNQR. Residues 127–147 form a helical membrane-spanning segment; sequence TRAKLAAASWFPGFPVATVQT. Residues 148–184 are Extracellular-facing; that stretch reads TWLFSFPFCGTNKVNHFFCDSPPVLRLVCADTALFEI. Residues 185–204 traverse the membrane as a helical segment; that stretch reads YAIVGTILVVMIPCLLILCS. The Cytoplasmic portion of the chain corresponds to 205–224; the sequence is YTHIAAAILKIPSAKGKNKA. The helical transmembrane segment at 225–245 threads the bilayer; the sequence is FSTCSSHLLVVSLFYISLSLT. The Extracellular portion of the chain corresponds to 246–258; sequence YFRPKSNNSPEGK. Residues 259 to 279 form a helical membrane-spanning segment; that stretch reads KLLSLSYTVMTPMLNPIIYSL. At 280–301 the chain is on the cytoplasmic side; sequence RNNEVKNALSRTVSKALALRNC.

The protein belongs to the G-protein coupled receptor 1 family.

The protein localises to the cell membrane. Odorant receptor. The polypeptide is Olfactory receptor 10A2 (OR10A2) (Homo sapiens (Human)).